A 237-amino-acid chain; its full sequence is 5'-methylthioadenosine/S-adenosylhomocysteine nucleosidase (237 aa).

The active-site Proton acceptor is E12. Residues A78, I152, and 173 to 174 each bind substrate; that span reads ME. The active-site Proton donor is the D197.

Belongs to the PNP/UDP phosphorylase family. MtnN subfamily. In terms of assembly, homodimer.

It carries out the reaction S-adenosyl-L-homocysteine + H2O = S-(5-deoxy-D-ribos-5-yl)-L-homocysteine + adenine. It catalyses the reaction S-methyl-5'-thioadenosine + H2O = 5-(methylsulfanyl)-D-ribose + adenine. The catalysed reaction is 5'-deoxyadenosine + H2O = 5-deoxy-D-ribose + adenine. It functions in the pathway amino-acid biosynthesis; L-methionine biosynthesis via salvage pathway; S-methyl-5-thio-alpha-D-ribose 1-phosphate from S-methyl-5'-thioadenosine (hydrolase route): step 1/2. Catalyzes the irreversible cleavage of the glycosidic bond in both 5'-methylthioadenosine (MTA) and S-adenosylhomocysteine (SAH/AdoHcy) to adenine and the corresponding thioribose, 5'-methylthioribose and S-ribosylhomocysteine, respectively. Also cleaves 5'-deoxyadenosine, a toxic by-product of radical S-adenosylmethionine (SAM) enzymes, into 5-deoxyribose and adenine. Thus, is required for in vivo function of the radical SAM enzymes biotin synthase and lipoic acid synthase, that are inhibited by 5'-deoxyadenosine accumulation. The chain is 5'-methylthioadenosine/S-adenosylhomocysteine nucleosidase from Hamiltonella defensa subsp. Acyrthosiphon pisum (strain 5AT).